The sequence spans 223 residues: Deoxyribose-phosphate aldolase (223 aa).

Aspartate 89 serves as the catalytic Proton donor/acceptor. The active-site Schiff-base intermediate with acetaldehyde is lysine 152. Catalysis depends on lysine 181, which acts as the Proton donor/acceptor.

This sequence belongs to the DeoC/FbaB aldolase family. DeoC type 1 subfamily.

The protein localises to the cytoplasm. The catalysed reaction is 2-deoxy-D-ribose 5-phosphate = D-glyceraldehyde 3-phosphate + acetaldehyde. It functions in the pathway carbohydrate degradation; 2-deoxy-D-ribose 1-phosphate degradation; D-glyceraldehyde 3-phosphate and acetaldehyde from 2-deoxy-alpha-D-ribose 1-phosphate: step 2/2. Its function is as follows. Catalyzes a reversible aldol reaction between acetaldehyde and D-glyceraldehyde 3-phosphate to generate 2-deoxy-D-ribose 5-phosphate. In Bacillus subtilis (strain 168), this protein is Deoxyribose-phosphate aldolase.